The primary structure comprises 342 residues: Aquaporin-8 (342 aa).

A run of 3 helical transmembrane segments spans residues 55-75 (FLAVFVLMVFIEGSAATAIFT), 98-118 (VAGGVSGAFLNPAVALAFAVL), and 126-146 (CIFYMISQYLAAFVASCTMFA). Residues 108–110 (NPA) carry the NPA 1 motif. N166 is a glycosylation site (N-linked (GlcNAc...) asparagine). The next 2 membrane-spanning stretches (helical) occupy residues 184 to 204 (TAFADQVFCTAILLIVVLAMC) and 215 to 235 (FLPIAIGLLIITISCTLSYNA). The short motif at 240–242 (NPS) is the NPA 2 element. The chain crosses the membrane as a helical span at residues 266–286 (YTWFFVPVLGSHCGAIIGGAI). Polar residues predominate over residues 302–327 (TNSVSSMSYNEDNSTLTKRKQVSNIV). A disordered region spans residues 302–342 (TNSVSSMSYNEDNSTLTKRKQVSNIVHDSKGAKGSSTAPVN). An N-linked (GlcNAc...) asparagine glycan is attached at N314.

This sequence belongs to the MIP/aquaporin (TC 1.A.8) family.

It is found in the cell membrane. Functionally, aquaglyceroporin that may modulate the water content and osmolytes during anhydrobiosis. The polypeptide is Aquaporin-8 (Milnesium tardigradum (Water bear)).